We begin with the raw amino-acid sequence, 373 residues long: Histidinol-phosphate aminotransferase (373 aa).

Residue K230 is modified to N6-(pyridoxal phosphate)lysine.

The protein belongs to the class-II pyridoxal-phosphate-dependent aminotransferase family. Histidinol-phosphate aminotransferase subfamily. As to quaternary structure, homodimer. Requires pyridoxal 5'-phosphate as cofactor.

The catalysed reaction is L-histidinol phosphate + 2-oxoglutarate = 3-(imidazol-4-yl)-2-oxopropyl phosphate + L-glutamate. Its pathway is amino-acid biosynthesis; L-histidine biosynthesis; L-histidine from 5-phospho-alpha-D-ribose 1-diphosphate: step 7/9. The polypeptide is Histidinol-phosphate aminotransferase (Synechococcus sp. (strain ATCC 27144 / PCC 6301 / SAUG 1402/1) (Anacystis nidulans)).